Consider the following 188-residue polypeptide: Mitochondrial import receptor subunit TOM20 homolog (188 aa).

Residues 1 to 12 (MSDTILGFNKSN) lie on the Mitochondrial intermembrane side of the membrane. Residues 13 to 31 (VVLAAGIAGAAFLGYCIYF) traverse the membrane as a helical segment. Topologically, residues 32-188 (DHKRINAPDY…ELIDDTDDLE (157 aa)) are cytoplasmic. Disordered stretches follow at residues 42–73 (KDKIRQKRRAQAGAGGMAPRRPAAAGNDAAPD) and 156–188 (DEAENEPPMVQYLGDGPPPAQIQELIDDTDDLE). Positions 58–67 (MAPRRPAAAG) are enriched in low complexity.

The protein belongs to the Tom20 family. In terms of assembly, forms part of the preprotein translocase complex of the outer mitochondrial membrane (TOM complex).

The protein localises to the mitochondrion outer membrane. Central component of the receptor complex responsible for the recognition and translocation of cytosolically synthesized mitochondrial preproteins. Together with tomm-22 functions as the transit peptide receptor at the surface of the mitochondrion outer membrane and facilitates the movement of preproteins into the translocation pore. The protein is Mitochondrial import receptor subunit TOM20 homolog of Caenorhabditis elegans.